The chain runs to 340 residues: Ribosomal RNA large subunit methyltransferase F (340 aa).

Belongs to the methyltransferase superfamily. METTL16/RlmF family.

It is found in the cytoplasm. It catalyses the reaction adenosine(1618) in 23S rRNA + S-adenosyl-L-methionine = N(6)-methyladenosine(1618) in 23S rRNA + S-adenosyl-L-homocysteine + H(+). Specifically methylates the adenine in position 1618 of 23S rRNA. This chain is Ribosomal RNA large subunit methyltransferase F, found in Dechloromonas aromatica (strain RCB).